A 307-amino-acid chain; its full sequence is Taste receptor type 2 member 106 (307 aa).

Over 1 to 7 (MLTIPEG) the chain is Extracellular. Residues 8–28 (ILLCFITSGSVLGVLGNGFIL) form a helical membrane-spanning segment. At 29-41 (HVNCTDCVRQKFS) the chain is on the cytoplasmic side. The chain crosses the membrane as a helical span at residues 42–62 (TTGFIFTGLAISRICVICIII). The Extracellular segment spans residues 63 to 81 (SDGYLKLFSPHMVASDAHI). The chain crosses the membrane as a helical span at residues 82 to 104 (IGISYLWIITNHTSTCFATILNL). Topologically, residues 105 to 124 (FYFLKIANFSHYIFFCLKRK) are cytoplasmic. Residues 125–145 (LNTIFIFLLGCLFISWSVAFP) form a helical membrane-spanning segment. The Extracellular portion of the chain corresponds to 146–179 (QTVKIFNDKMKHRNTSWKFHLHKSKFIINHILLN). An N-linked (GlcNAc...) asparagine glycan is attached at N159. Residues 180–200 (LGVIFFCMVAIITSFLLIISL) form a helical membrane-spanning segment. The Cytoplasmic portion of the chain corresponds to 201–227 (WKHNRKMQLYVSRFKSLNTEVHLKVMK). The helical transmembrane segment at 228–248 (VLISFIILLILHVIGILIETL) threads the bilayer. Over 249–257 (SFLRYENKL) the chain is Extracellular. Residues 258 to 278 (LLILGLNFSSMYPCCHSFILI) form a helical membrane-spanning segment. Over 279–307 (LANNQLKQASLKALKQFKCHKKDKDVRET) the chain is Cytoplasmic.

It belongs to the G-protein coupled receptor T2R family.

It is found in the membrane. Its function is as follows. Putative taste receptor which may play a role in the perception of bitterness. This is Taste receptor type 2 member 106 from Rattus norvegicus (Rat).